The chain runs to 273 residues: NAD-dependent protein deacylase (273 aa).

In terms of domain architecture, Deacetylase sirtuin-type spans 20–272 (RERLRQRIFF…PEFVEKLLKG (253 aa)). Residue 48–67 (GAGISAESGIRTFRAADGLW) participates in NAD(+) binding. The substrate site is built by Tyr92 and Arg95. 129–132 (QNID) contacts NAD(+). His147 acts as the Proton acceptor in catalysis. Cys155 and Cys174 together coordinate Zn(2+). Residues 214 to 216 (GTS), 240 to 242 (NLE), and Ala258 contribute to the NAD(+) site.

The protein belongs to the sirtuin family. Class III subfamily. The cofactor is Zn(2+).

It is found in the cytoplasm. It catalyses the reaction N(6)-acetyl-L-lysyl-[protein] + NAD(+) + H2O = 2''-O-acetyl-ADP-D-ribose + nicotinamide + L-lysyl-[protein]. The catalysed reaction is N(6)-succinyl-L-lysyl-[protein] + NAD(+) + H2O = 2''-O-succinyl-ADP-D-ribose + nicotinamide + L-lysyl-[protein]. The enzyme catalyses N(6)-(2-hydroxyisobutanoyl)-L-lysyl-[protein] + NAD(+) + H2O = 2''-O-(2-hydroxyisobutanoyl)-ADP-D-ribose + nicotinamide + L-lysyl-[protein]. Functionally, NAD-dependent lysine deacetylase that specifically removes acetyl groups on target proteins. Also acts as a protein-lysine deacylase by mediating protein desuccinylation and de-2-hydroxyisobutyrylation. Modulates the activities of several proteins which are inactive in their acylated form. This is NAD-dependent protein deacylase from Escherichia coli O157:H7.